Here is a 255-residue protein sequence, read N- to C-terminus: Small ribosomal subunit protein eS1 (255 aa).

Residue Ala-2 is modified to N-acetylalanine; partial.

The protein belongs to the eukaryotic ribosomal protein eS1 family. As to quaternary structure, component of the small ribosomal subunit. Mature ribosomes consist of a small (40S) and a large (60S) subunit. The 40S subunit contains about 33 different proteins and 1 molecule of RNA (18S). The 60S subunit contains about 49 different proteins and 3 molecules of RNA (25S, 5.8S and 5S).

The protein localises to the cytoplasm. This chain is Small ribosomal subunit protein eS1, found in Vanderwaltozyma polyspora (strain ATCC 22028 / DSM 70294 / BCRC 21397 / CBS 2163 / NBRC 10782 / NRRL Y-8283 / UCD 57-17) (Kluyveromyces polysporus).